Consider the following 681-residue polypeptide: Phosphomethylpyrimidine synthase (681 aa).

A compositionally biased stretch (polar residues) spans 1 to 13; it reads MSNNTTSLPAENS. Residues 1–29 form a disordered region; it reads MSNNTTSLPAENSSHPRKGTPIRKKQREE. Basic residues predominate over residues 15 to 25; the sequence is HPRKGTPIRKK. Substrate-binding positions include Asn-254, Met-283, Tyr-312, His-348, 368 to 370, 409 to 412, and Glu-448; these read SRG and DGLR. Zn(2+) is bound at residue His-452. A substrate-binding site is contributed by Tyr-475. His-516 is a binding site for Zn(2+). [4Fe-4S] cluster-binding residues include Cys-596, Cys-599, and Cys-604. Basic and acidic residues predominate over residues 658-667; the sequence is FRSRGSELYH. The interval 658–681 is disordered; sequence FRSRGSELYHRPANLSAEANNEPT.

It belongs to the ThiC family. As to quaternary structure, homodimer. [4Fe-4S] cluster serves as cofactor.

The enzyme catalyses 5-amino-1-(5-phospho-beta-D-ribosyl)imidazole + S-adenosyl-L-methionine = 4-amino-2-methyl-5-(phosphooxymethyl)pyrimidine + CO + 5'-deoxyadenosine + formate + L-methionine + 3 H(+). Its pathway is cofactor biosynthesis; thiamine diphosphate biosynthesis. Its function is as follows. Catalyzes the synthesis of the hydroxymethylpyrimidine phosphate (HMP-P) moiety of thiamine from aminoimidazole ribotide (AIR) in a radical S-adenosyl-L-methionine (SAM)-dependent reaction. The sequence is that of Phosphomethylpyrimidine synthase from Yersinia pseudotuberculosis serotype I (strain IP32953).